The primary structure comprises 215 residues: Small ribosomal subunit protein uS7 (215 aa).

This sequence belongs to the universal ribosomal protein uS7 family. As to quaternary structure, part of the 30S ribosomal subunit.

Functionally, one of the primary rRNA binding proteins, it binds directly to 16S rRNA where it nucleates assembly of the head domain of the 30S subunit. Is located at the subunit interface close to the decoding center. The sequence is that of Small ribosomal subunit protein uS7 from Pyrococcus furiosus (strain ATCC 43587 / DSM 3638 / JCM 8422 / Vc1).